The primary structure comprises 128 residues: MPTFNQLVKYGREKRKKKSKAPALQGCPQKRGVCVRVYTVTPKKPNSALRKVARVRLSNGIEVTAYIPGEGHNLQEHSIVLVRGGRVKDLPGVRYKIIRGALDAAGVEGRRQSRSKYGTKRPKEEKGG.

A disordered region spans residues Met-1–Leu-24. 3-methylthioaspartic acid is present on Asp-89. The segment at Ala-105 to Gly-128 is disordered.

This sequence belongs to the universal ribosomal protein uS12 family. In terms of assembly, part of the 30S ribosomal subunit. Contacts proteins S8 and S17. May interact with IF1 in the 30S initiation complex.

Functionally, with S4 and S5 plays an important role in translational accuracy. Interacts with and stabilizes bases of the 16S rRNA that are involved in tRNA selection in the A site and with the mRNA backbone. Located at the interface of the 30S and 50S subunits, it traverses the body of the 30S subunit contacting proteins on the other side and probably holding the rRNA structure together. The combined cluster of proteins S8, S12 and S17 appears to hold together the shoulder and platform of the 30S subunit. In Aquifex aeolicus (strain VF5), this protein is Small ribosomal subunit protein uS12.